Consider the following 96-residue polypeptide: MRNYELMIILDPEVDERTVAPSLDKFLSVIKTGGGSVDNVDIWGKRRLAYEINKRAEGIYAVVNLTATPDLAKELDRQLGLNEAVLRTKLIRPDAH.

It belongs to the bacterial ribosomal protein bS6 family.

Functionally, binds together with bS18 to 16S ribosomal RNA. The polypeptide is Small ribosomal subunit protein bS6 (Beutenbergia cavernae (strain ATCC BAA-8 / DSM 12333 / CCUG 43141 / JCM 11478 / NBRC 16432 / NCIMB 13614 / HKI 0122)).